We begin with the raw amino-acid sequence, 192 residues long: Small ribosomal subunit protein eS7 (192 aa).

The protein belongs to the eukaryotic ribosomal protein eS7 family.

This chain is Small ribosomal subunit protein eS7 (RPS7), found in Secale cereale (Rye).